Here is a 550-residue protein sequence, read N- to C-terminus: MGNCCVTPEGSGRGRKKQQQEQKQKQKEPKQQQQQQKKGKKPNPFSIEYNRSSAPSGHRLVVLREPTGRDIAARYELGGELGRGEFGVTYLCTERETGDAYACKSISKKKLRTAVDIEDVRREVDIMRHLPKHPNIVTLRDTYEDDNAVHLVMELCEGGELFDRIVARGHYTERAAALVTRTIVEVVQMCHKHGVMHRDLKPENFLFANKKETAALKAIDFGLSVFFTPGERFTEIVGSPYYMAPEVLKRNYGPEVDVWSAGVILYILLCGVPPFWAETEQGVAQAIIRSVIDFKRDPWPRVSDNAKDLVKGMLNPDPRRRLNAQQVLDHPWLQNIKKAPNVNLGETVKARLQQFSVMNKFKKHALRVIAEHLSVEEVAGIKDMFEKMDLNKDNMINFDELKLGLHKLGHQMADADVQILMDAADVDGNGSLDYGEFVALSVHLRKIGNDEHLHKAFAYFDRNQSGYIEIDELRESLADDLGANHEEVINAIIRDVDTDKDGKISYDEFAAMMKAGTDWRKASRQYSRERFTSLSLKLQKDGSLQLTTTQ.

The disordered stretch occupies residues 1 to 58 (MGNCCVTPEGSGRGRKKQQQEQKQKQKEPKQQQQQQKKGKKPNPFSIEYNRSSAPSGH). A lipid anchor (N-myristoyl glycine) is attached at glycine 2. Residues 18-30 (QQQEQKQKQKEPK) show a composition bias toward basic and acidic residues. One can recognise a Protein kinase domain in the interval 75–333 (YELGGELGRG…AQQVLDHPWL (259 aa)). ATP-binding positions include 81 to 89 (LGRGEFGVT) and lysine 104. Aspartate 199 acts as the Proton acceptor in catalysis. The autoinhibitory domain stretch occupies residues 339-369 (APNVNLGETVKARLQQFSVMNKFKKHALRVI). EF-hand domains follow at residues 376–411 (EEVA…LGHQ), 412–447 (MADA…LRKI), 448–483 (GNDE…DLGA), and 484–519 (NHEE…GTDW). Residues aspartate 389, asparagine 391, aspartate 393, methionine 395, glutamate 400, aspartate 425, aspartate 427, asparagine 429, serine 431, glutamate 436, aspartate 461, asparagine 463, serine 465, tyrosine 467, glutamate 472, aspartate 497, aspartate 499, aspartate 501, lysine 503, and glutamate 508 each coordinate Ca(2+).

The protein belongs to the protein kinase superfamily. Ser/Thr protein kinase family. CDPK subfamily. As to expression, expressed in roots and leaf blades.

The protein localises to the membrane. The enzyme catalyses L-seryl-[protein] + ATP = O-phospho-L-seryl-[protein] + ADP + H(+). It catalyses the reaction L-threonyl-[protein] + ATP = O-phospho-L-threonyl-[protein] + ADP + H(+). Its activity is regulated as follows. Activated by calcium. Autophosphorylation may play an important role in the regulation of the kinase activity. May play a role in signal transduction pathways that involve calcium as a second messenger. The polypeptide is Calcium-dependent protein kinase 20 (Oryza sativa subsp. japonica (Rice)).